We begin with the raw amino-acid sequence, 830 residues long: Penicillin-binding protein 1A (830 aa).

The Cytoplasmic segment spans residues 1–18; that stretch reads MGKKKKKRKSSAFKIILN. Residues 19 to 39 form a helical; Signal-anchor for type II membrane protein membrane-spanning segment; it reads VFLSIFLVAGVAFGGIVFAMI. At 40–830 the chain is on the extracellular side; it reads KTAPPLNVQQ…QNHEDNKNKQ (791 aa). Residues 57–229 form a transglycosylase region; that stretch reads SILYDDKGQY…PSVYYPYSSA (173 aa). Glu96 acts as the Proton donor; for transglycosylase activity in catalysis. A transpeptidase region spans residues 357-641; sequence ASAVIMDYHN…AARLWGDIMK (285 aa). The active-site Acyl-ester intermediate; for transpeptidase activity is Ser398. The disordered stretch occupies residues 754–830; that stretch reads GGSLPPTEEK…QNHEDNKNKQ (77 aa). Residues 760–786 are compositionally biased toward basic and acidic residues; the sequence is TEEKNNSNTRDKNKDKNKNKNKDKNPS. Residues 787–820 are compositionally biased toward low complexity; that stretch reads QDKPNNNNNDNNSNNNNNNNDNNNNTKPPENDSN. Basic and acidic residues predominate over residues 821-830; it reads QNHEDNKNKQ.

It in the N-terminal section; belongs to the glycosyltransferase 51 family. The protein in the C-terminal section; belongs to the transpeptidase family.

It is found in the cell membrane. It carries out the reaction [GlcNAc-(1-&gt;4)-Mur2Ac(oyl-L-Ala-gamma-D-Glu-L-Lys-D-Ala-D-Ala)](n)-di-trans,octa-cis-undecaprenyl diphosphate + beta-D-GlcNAc-(1-&gt;4)-Mur2Ac(oyl-L-Ala-gamma-D-Glu-L-Lys-D-Ala-D-Ala)-di-trans,octa-cis-undecaprenyl diphosphate = [GlcNAc-(1-&gt;4)-Mur2Ac(oyl-L-Ala-gamma-D-Glu-L-Lys-D-Ala-D-Ala)](n+1)-di-trans,octa-cis-undecaprenyl diphosphate + di-trans,octa-cis-undecaprenyl diphosphate + H(+). The catalysed reaction is Preferential cleavage: (Ac)2-L-Lys-D-Ala-|-D-Ala. Also transpeptidation of peptidyl-alanyl moieties that are N-acyl substituents of D-alanine.. Its pathway is cell wall biogenesis; peptidoglycan biosynthesis. Functionally, cell wall formation. Synthesis of cross-linked peptidoglycan from the lipid intermediates. The enzyme has a penicillin-insensitive transglycosylase N-terminal domain (formation of linear glycan strands) and a penicillin-sensitive transpeptidase C-terminal domain (cross-linking of the peptide subunits). The protein is Penicillin-binding protein 1A (pbpA) of Clostridium botulinum (strain Hall / ATCC 3502 / NCTC 13319 / Type A).